The sequence spans 306 residues: Probable cobalamin biosynthesis protein CobD (306 aa).

A run of 5 helical transmembrane segments spans residues 54 to 74 (LFGF…TYEI), 88 to 108 (ISIY…IEFS), 155 to 175 (ITDS…PGAF), 215 to 235 (IAGM…KSAI), and 286 to 306 (SLKA…VLLM).

It belongs to the CobD/CbiB family.

The protein resides in the cell membrane. It functions in the pathway cofactor biosynthesis; adenosylcobalamin biosynthesis. Its function is as follows. Converts cobyric acid to cobinamide by the addition of aminopropanol on the F carboxylic group. This Methanococcus maripaludis (strain C7 / ATCC BAA-1331) protein is Probable cobalamin biosynthesis protein CobD.